The following is a 103-amino-acid chain: Large ribosomal subunit protein uL24 (103 aa).

This sequence belongs to the universal ribosomal protein uL24 family. Part of the 50S ribosomal subunit.

Its function is as follows. One of two assembly initiator proteins, it binds directly to the 5'-end of the 23S rRNA, where it nucleates assembly of the 50S subunit. Functionally, one of the proteins that surrounds the polypeptide exit tunnel on the outside of the subunit. The polypeptide is Large ribosomal subunit protein uL24 (Geobacillus sp. (strain WCH70)).